Here is a 430-residue protein sequence, read N- to C-terminus: N-lysine methyltransferase SMYD2-A (430 aa).

One can recognise an SET domain in the interval 5–239 (EGLERFDSPG…AGDEVFTSYI (235 aa)). 15 to 17 (KGR) provides a ligand contact to S-adenosyl-L-methionine. Cysteine 50, cysteine 53, cysteine 63, cysteine 66, cysteine 72, cysteine 76, histidine 84, and cysteine 88 together coordinate Zn(2+). The MYND-type zinc-finger motif lies at 50–88 (CDFCFARKEGLSKCGKCKQAFYCNVDCQKGDWPMHKLEC). Residues histidine 135, 204-205 (NH), and 256-258 (YFF) contribute to the S-adenosyl-L-methionine site.

The protein belongs to the class V-like SAM-binding methyltransferase superfamily.

The protein localises to the cytoplasm. It is found in the cytosol. Its subcellular location is the nucleus. The enzyme catalyses L-lysyl(4)-[histone H3] + 3 S-adenosyl-L-methionine = N(6),N(6),N(6)-trimethyl-L-lysyl(4)-[histone H3] + 3 S-adenosyl-L-homocysteine + 3 H(+). The catalysed reaction is L-lysyl-[protein] + S-adenosyl-L-methionine = N(6)-methyl-L-lysyl-[protein] + S-adenosyl-L-homocysteine + H(+). In terms of biological role, protein-lysine N-methyltransferase that methylates both histones and non-histone proteins, including p53/TP53 and RB1. Specifically trimethylates histone H3 'Lys-4' (H3K4me3) in vivo. The activity requires interaction with HSP90alpha. Shows even higher methyltransferase activity on p53/TP53. Monomethylates 'Lys-370' of p53/TP53, leading to decreased DNA-binding activity and subsequent transcriptional regulation activity of p53/TP53. Monomethylates RB1 at 'Lys-860'. The protein is N-lysine methyltransferase SMYD2-A (smyd2-a) of Xenopus laevis (African clawed frog).